Here is a 160-residue protein sequence, read N- to C-terminus: SsrA-binding protein (160 aa).

The interval 133–160 is disordered; sequence GKKLHDKRDTEKERDWKREQQRLLRDRG. A compositionally biased stretch (basic and acidic residues) spans 138-160; that stretch reads DKRDTEKERDWKREQQRLLRDRG.

The protein belongs to the SmpB family.

The protein resides in the cytoplasm. In terms of biological role, required for rescue of stalled ribosomes mediated by trans-translation. Binds to transfer-messenger RNA (tmRNA), required for stable association of tmRNA with ribosomes. tmRNA and SmpB together mimic tRNA shape, replacing the anticodon stem-loop with SmpB. tmRNA is encoded by the ssrA gene; the 2 termini fold to resemble tRNA(Ala) and it encodes a 'tag peptide', a short internal open reading frame. During trans-translation Ala-aminoacylated tmRNA acts like a tRNA, entering the A-site of stalled ribosomes, displacing the stalled mRNA. The ribosome then switches to translate the ORF on the tmRNA; the nascent peptide is terminated with the 'tag peptide' encoded by the tmRNA and targeted for degradation. The ribosome is freed to recommence translation, which seems to be the essential function of trans-translation. The protein is SsrA-binding protein of Rhizorhabdus wittichii (strain DSM 6014 / CCUG 31198 / JCM 15750 / NBRC 105917 / EY 4224 / RW1) (Sphingomonas wittichii).